A 492-amino-acid polypeptide reads, in one-letter code: N-succinylglutamate 5-semialdehyde dehydrogenase (492 aa).

220–225 (GSANTG) contacts NAD(+). Active-site residues include glutamate 243 and cysteine 277.

Belongs to the aldehyde dehydrogenase family. AstD subfamily.

It catalyses the reaction N-succinyl-L-glutamate 5-semialdehyde + NAD(+) + H2O = N-succinyl-L-glutamate + NADH + 2 H(+). It participates in amino-acid degradation; L-arginine degradation via AST pathway; L-glutamate and succinate from L-arginine: step 4/5. Functionally, catalyzes the NAD-dependent reduction of succinylglutamate semialdehyde into succinylglutamate. This chain is N-succinylglutamate 5-semialdehyde dehydrogenase, found in Escherichia coli (strain ATCC 8739 / DSM 1576 / NBRC 3972 / NCIMB 8545 / WDCM 00012 / Crooks).